The sequence spans 125 residues: Profilin-A (125 aa).

Residue Ser-2 is modified to N-acetylserine.

It belongs to the profilin family. Occurs in many kinds of cells as a complex with monomeric actin in a 1:1 ratio.

It localises to the cytoplasm. The protein resides in the cytoskeleton. Functionally, binds to actin and affects the structure of the cytoskeleton. At high concentrations, profilin prevents the polymerization of actin, whereas it enhances it at low concentrations. By binding to PIP2, it inhibits the formation of IP3 and DG. This Physarum polycephalum (Slime mold) protein is Profilin-A (PROA).